We begin with the raw amino-acid sequence, 129 residues long: Holo-[acyl-carrier-protein] synthase (129 aa).

Asp8 and Glu60 together coordinate Mg(2+).

Belongs to the P-Pant transferase superfamily. AcpS family. Mg(2+) is required as a cofactor.

The protein localises to the cytoplasm. The enzyme catalyses apo-[ACP] + CoA = holo-[ACP] + adenosine 3',5'-bisphosphate + H(+). Its function is as follows. Transfers the 4'-phosphopantetheine moiety from coenzyme A to a Ser of acyl-carrier-protein. The polypeptide is Holo-[acyl-carrier-protein] synthase (Anaeromyxobacter sp. (strain Fw109-5)).